The sequence spans 1325 residues: Sperm-specific sodium:proton exchanger (1325 aa).

A signal peptide spans 1–29 (MKKRVVKLRELVPAVAALAVAVLIQSATG). A disordered region spans residues 28 to 68 (TGSSGGSGHTPTTQATHADDHDLTTHNGTEEHDDGHDDGHD). The Extracellular portion of the chain corresponds to 30–76 (SSGGSGHTPTTQATHADDHDLTTHNGTEEHDDGHDDGHDDLHAHAPK). Over residues 44–68 (HADDHDLTTHNGTEEHDDGHDDGHD) the composition is skewed to basic and acidic residues. A 1,2-diacylglycero-3-phosphate is bound at residue His-73. Residues 77–96 (VIVFISGSCLFGAISRSLFK) form a helical membrane-spanning segment. Residues 97-101 (KLPIP) lie on the Cytoplasmic side of the membrane. A helical transmembrane segment spans residues 102–119 (YTVVLLILGAILGVVASN). Topologically, residues 120-135 (VPLVEEHTRDVAHMDP) are extracellular. Residues 136-152 (HVLLQIFLPVLIFESAF) traverse the membrane as a helical segment. The Cytoplasmic segment spans residues 153–162 (AMDVHTFMRS). The chain crosses the membrane as a helical span at residues 163–188 (FSQVCILALFGLVVASVLTAVLAMNL). The interval 163–250 (FSQVCILALF…AIVIFNVFMK (88 aa)) is transport core domain. At 189–194 (FNYNWN) the chain is on the extracellular side. The chain crosses the membrane as a helical span at residues 195–220 (FSEAMMFGAIMSATDPVAVVALLKDL). The Cytoplasmic segment spans residues 221 to 223 (GAS). The chain crosses the membrane as a helical span at residues 224–249 (KQLGTIIEGESLLNDGCAIVIFNVFM). An Essential for sodium:proton exchange motif is present at residues 237–238 (ND). At 250–260 (KMVFFPQLTST) the chain is on the extracellular side. The chain crosses the membrane as a helical span at residues 261-292 (VGQNVLYFLQVAVAGPLWGYAVAKVTVFFLSH). Residues 293 to 296 (IFND) lie on the Cytoplasmic side of the membrane. Residues 297–319 (ALVEITITLAATYLTYYIGDIWL) traverse the membrane as a helical segment. The Extracellular portion of the chain corresponds to 320 to 322 (EVS). The chain crosses the membrane as a helical span at residues 323–336 (GVLAVVVLGLIVNA). Topologically, residues 337-343 (EKTSISP) are cytoplasmic. The chain crosses the membrane as a helical span at residues 344 to 377 (EVEVFLHRFWEMLAYLANTLIFMMVGVVVTQKAL). Residues 378-382 (VAVDK) lie on the Extracellular side of the membrane. The chain crosses the membrane as a helical span at residues 383–412 (MDWFYLIILYLAITIIRGMVISLFSPILSR). A transport core domain region spans residues 383–481 (MDWFYLIILY…TTIQTLLRIL (99 aa)). Over 413 to 418 (IGYGLT) the chain is Cytoplasmic. Residues 419-446 (WRNAVIMTWGGLRGAVGLALALVVENLA) form a helical membrane-spanning segment. The Extracellular portion of the chain corresponds to 447-450 (GNDV). The helical transmembrane segment at 451-481 (IGSKFLFHTAGIVVLTLVINATTIQTLLRIL) threads the bilayer. Residues 482-677 (GMSDISIPKR…GKLMYKICHH (196 aa)) are Cytoplasmic-facing. Positions 575–620 (FADMMEEARLRMLKAEKISYWKQFEHGMLAREALRLLVQHAEVAAD) are interacts with the S4 segment of voltage sensor domain. Residues 605-620 (REALRLLVQHAEVAAD) form an interacts with the transport core domain; can lock the transporter in the inward conformation region. A helical transmembrane segment spans residues 678–708 (MAFEVTINIAIVLNIVPIIMEFVVQDKMASV). At 709–724 (STMAAPGSTVSSEPSS) the chain is on the extracellular side. The helical transmembrane segment at 725–752 (LQKIEDALRISNYVFFVIYAIEAIVKIL) threads the bilayer. At 753–760 (GLGRHYIV) the chain is on the cytoplasmic side. The helical transmembrane segment at 761–784 (SHWNKFDAFILVVALVDIIIAETL) threads the bilayer. Topologically, residues 785–795 (LKGSITINLSS) are extracellular. The chain crosses the membrane as a helical span at residues 796 to 822 (IKVVKLFRLLRGLRMLRLTKALIPKLI). The tract at residues 796–857 (IKVVKLFRLL…EEVGKIIDRM (62 aa)) is S4 segment of voltage sensor domain. The Cytoplasmic segment spans residues 823-1325 (LVVNGKINNQ…EEGAAPRVNV (503 aa)). The segment at 860–919 (NKKILRELKHISETGRLQVVKELGLLQREHPGIAVSVKTRQAIRTILNHSRETIHELQGA) is interacts with the S4 segment of voltage sensor domain. Residues 968 to 1068 (KLIDFIKARA…CETTVQVYFI (101 aa)) form a cNMP-binding domain region. Gly-1043 contacts 3',5'-cyclic AMP. Gly-1043, Glu-1044, and Met-1045 together coordinate 3',5'-cyclic GMP. Residues Met-1045, Gly-1046, Arg-1053, and Asn-1054 each coordinate 3',5'-cyclic AMP. 2 residues coordinate 3',5'-cyclic GMP: Arg-1053 and Asn-1054. A disordered region spans residues 1237–1325 (MLSRKSSGAA…EEGAAPRVNV (89 aa)). Residues 1266–1280 (VSPSVPTKTTPKPKS) are compositionally biased toward low complexity.

It belongs to the monovalent cation:proton antiporter 1 (CPA1) transporter (TC 2.A.36) family. In terms of assembly, homodimer; the dimerization is stabilized in the presence of phosphatidic acids.

The protein resides in the cell projection. Its subcellular location is the cilium. It is found in the flagellum membrane. It catalyses the reaction Na(+)(in) + H(+)(out) = Na(+)(out) + H(+)(in). Its activity is regulated as follows. Gated by voltage and stimulated by cyclic nucleotides which shift the activation voltage closer to resting membrane potential. Not inhibited by common sodium:proton exchanger inhibitors such as amiloride. Functionally, electroneutral sodium:proton antiporter that regulates intracellular pH of sperm along with capacitation and fertility. Activated in response to egg-derived chemoattractants, couples membrane voltage to sodium:proton exchange and transduces membrane hyperpolarization to cytoplasmic alkalization to cAMP signaling and ultimately to sperm motility. The polypeptide is Sperm-specific sodium:proton exchanger (Strongylocentrotus purpuratus (Purple sea urchin)).